A 391-amino-acid chain; its full sequence is Probable tRNA sulfurtransferase (391 aa).

Positions 60 to 167 constitute a THUMP domain; the sequence is DEIIDHIKKV…KDNCYVYTDR (108 aa). ATP is bound by residues 185–186, 210–211, arginine 267, glycine 289, and glutamine 298; these read LL and HF.

Belongs to the ThiI family.

The protein localises to the cytoplasm. The catalysed reaction is [ThiI sulfur-carrier protein]-S-sulfanyl-L-cysteine + a uridine in tRNA + 2 reduced [2Fe-2S]-[ferredoxin] + ATP + H(+) = [ThiI sulfur-carrier protein]-L-cysteine + a 4-thiouridine in tRNA + 2 oxidized [2Fe-2S]-[ferredoxin] + AMP + diphosphate. It carries out the reaction [ThiS sulfur-carrier protein]-C-terminal Gly-Gly-AMP + S-sulfanyl-L-cysteinyl-[cysteine desulfurase] + AH2 = [ThiS sulfur-carrier protein]-C-terminal-Gly-aminoethanethioate + L-cysteinyl-[cysteine desulfurase] + A + AMP + 2 H(+). The protein operates within cofactor biosynthesis; thiamine diphosphate biosynthesis. In terms of biological role, catalyzes the ATP-dependent transfer of a sulfur to tRNA to produce 4-thiouridine in position 8 of tRNAs, which functions as a near-UV photosensor. Also catalyzes the transfer of sulfur to the sulfur carrier protein ThiS, forming ThiS-thiocarboxylate. This is a step in the synthesis of thiazole, in the thiamine biosynthesis pathway. The sulfur is donated as persulfide by IscS. The chain is Probable tRNA sulfurtransferase from Finegoldia magna (strain ATCC 29328 / DSM 20472 / WAL 2508) (Peptostreptococcus magnus).